Here is a 156-residue protein sequence, read N- to C-terminus: Ribosomal RNA large subunit methyltransferase H (156 aa).

S-adenosyl-L-methionine is bound by residues leucine 73, glycine 104, and 123–128 (ISSMTL).

Belongs to the RNA methyltransferase RlmH family. In terms of assembly, homodimer.

It localises to the cytoplasm. It carries out the reaction pseudouridine(1915) in 23S rRNA + S-adenosyl-L-methionine = N(3)-methylpseudouridine(1915) in 23S rRNA + S-adenosyl-L-homocysteine + H(+). In terms of biological role, specifically methylates the pseudouridine at position 1915 (m3Psi1915) in 23S rRNA. This Burkholderia vietnamiensis (strain G4 / LMG 22486) (Burkholderia cepacia (strain R1808)) protein is Ribosomal RNA large subunit methyltransferase H.